Reading from the N-terminus, the 255-residue chain is CD320 antigen (255 aa).

The N-terminal stretch at 1–29 (MNGWVARGLARRAAALGLGLRVLLCFGLC) is a signal peptide. At 30–203 (LEIAPTPIQT…SVQSGNRNVY (174 aa)) the chain is on the extracellular side. 2 consecutive LDL-receptor class A domains span residues 52 to 89 (SCPP…EECG) and 120 to 157 (SCPE…LGCG). 6 disulfides stabilise this stretch: C53–C66, C60–C79, C73–C88, C121–C134, C128–C147, and C141–C156. Residues W71, D74, D76, D78, D84, and E85 each contribute to the Ca(2+) site. Ca(2+) is bound by residues W139, D142, H144, D146, D152, and E153. N177 and N183 each carry an N-linked (GlcNAc...) asparagine glycan. Residues 204–224 (GIIAAVAVLSISLAAGILFAL) traverse the membrane as a helical segment. The Cytoplasmic segment spans residues 225 to 255 (SRLCAQGCLAPLGLLVSMKGSLQPEKKTSVL).

Interacts (via LDL-receptor class A domains) with TCN2.

The protein resides in the cell membrane. In terms of biological role, receptor for transcobalamin saturated with cobalamin (TCbl). Plays an important role in cobalamin uptake. Plasma membrane protein that is expressed on follicular dendritic cells (FDC) and mediates interaction with germinal center B cells. Functions as a costimulator to promote B cell responses to antigenic stimuli; promotes B cell differentiation and proliferation. Germinal center-B (GC-B) cells differentiate into memory B-cells and plasma cells (PC) through interaction with T-cells and follicular dendritic cells (FDC). CD320 augments the proliferation of PC precursors generated by IL-10. This Bos taurus (Bovine) protein is CD320 antigen (CD320).